The chain runs to 250 residues: uncharacterized protein (250 aa).

7 helical membrane-spanning segments follow: residues Val-36 to Val-56, Pro-73 to Met-93, Ala-101 to Leu-121, Val-128 to Thr-148, Phe-156 to Phe-176, Pro-180 to Tyr-200, and Phe-225 to Phe-245.

This sequence belongs to the BI1 family.

It localises to the cell membrane. This is an uncharacterized protein from Caulobacter vibrioides (strain ATCC 19089 / CIP 103742 / CB 15) (Caulobacter crescentus).